The primary structure comprises 787 residues: Mitochondrial intermediate peptidase (787 aa).

Residues 1 to 36 (MQNKVLRGILFKNVPLGYSYNRSIRHPTFGNSIIRW) constitute a mitochondrion transit peptide. Residue His-573 participates in Zn(2+) binding. Residue Glu-574 is part of the active site. Zn(2+) is bound by residues His-577 and His-580.

Belongs to the peptidase M3 family. Requires Zn(2+) as cofactor.

Its subcellular location is the mitochondrion matrix. The enzyme catalyses Release of an N-terminal octapeptide as second stage of processing of some proteins imported into the mitochondrion.. Cleaves proteins, imported into the mitochondrion, to their mature size. While most mitochondrial precursor proteins are processed to the mature form in one step by mitochondrial processing peptidase (MPP), the sequential cleavage by MIP of an octapeptide after initial processing by MPP is a required step for a subgroup of nuclear-encoded precursor proteins destined for the matrix or the inner membrane. This Vanderwaltozyma polyspora (strain ATCC 22028 / DSM 70294 / BCRC 21397 / CBS 2163 / NBRC 10782 / NRRL Y-8283 / UCD 57-17) (Kluyveromyces polysporus) protein is Mitochondrial intermediate peptidase (OCT1).